Reading from the N-terminus, the 309-residue chain is MAFRIPFAQDFWNEYLSGRENTIPTLPVVTDITERVIRVLGGNAGPMRLQGTNTYLVGTGRSRILVDTGQGMPSWIRDIAKVLEERDIDISYVLLTHWHGDHTGGVPDLIAYNPALSSRIYKNRPDAGQKDILDGQVFRVEGATLRAVHTPGHAADHMCFLFEEENALFTGDNVLGHGYSVVEDLGQYMNSMVQMANLNLPLGYPAHGAVIDDLPDKMREYIKHREFRVQQVYAILEESRAAGQGRGRGGLTLHEIILAMYGEITDEVEKALAPFLSQVLWKLAEDRKVGFEPGSAAKRRWYVRSRRPN.

Residues H97, H99, D101, and H102 each contribute to the Zn(2+) site. The Proton donor/acceptor role is filled by D101.

It belongs to the metallo-beta-lactamase superfamily. The cofactor is Zn(2+).

The enzyme catalyses 2,3,6,8,9-pentahydroxy-1-oxo-3-(2-oxopropyl)-1,2,3,4-tetrahydroanthracene-2-carboxyl-[ACP] + H2O = 2,3,6,8,9-pentahydroxy-1-oxo-3-(2-oxopropyl)-1,2,3,4-tetrahydroanthracene-2-carboxylate + holo-[ACP] + H(+). Its pathway is secondary metabolite biosynthesis. Lactamase-like protein; part of the gene cluster that mediates the biosynthesis of asperthecin, an anthraquinone pigment. Polyketide synthase (PKS) aptA catalyzes the formation of the aromatic polyketide from acetyl coenzyme A and seven malonyl coenzyme A molecules. Polyketide is subsequently hydrolyzed by the action of aptB into endocrocin-9-anthrone. Endocrocin-9-anthrone is then oxidized into endocrocin by aptC. Endocrocin is likely to decarboxylate spontaneously to form emodin which explains why there is no decarboxylase in the asperthecin biosynthesis cluster. Finally, aptC or another endogenous oxygenase catalyzes additional oxidation steps to form asperthecin. This Emericella nidulans (strain FGSC A4 / ATCC 38163 / CBS 112.46 / NRRL 194 / M139) (Aspergillus nidulans) protein is Lactamase-like protein aptB.